The sequence spans 111 residues: Ribonuclease P protein component (111 aa).

It belongs to the RnpA family. Consists of a catalytic RNA component (M1 or rnpB) and a protein subunit.

It carries out the reaction Endonucleolytic cleavage of RNA, removing 5'-extranucleotides from tRNA precursor.. In terms of biological role, RNaseP catalyzes the removal of the 5'-leader sequence from pre-tRNA to produce the mature 5'-terminus. It can also cleave other RNA substrates such as 4.5S RNA. The protein component plays an auxiliary but essential role in vivo by binding to the 5'-leader sequence and broadening the substrate specificity of the ribozyme. In Clostridium botulinum (strain 657 / Type Ba4), this protein is Ribonuclease P protein component.